Consider the following 390-residue polypeptide: 8-amino-7-oxononanoate synthase (390 aa).

Residue R19 participates in substrate binding. 106–107 serves as a coordination point for pyridoxal 5'-phosphate; it reads GY. H131 contributes to the substrate binding site. Positions 176, 204, and 233 each coordinate pyridoxal 5'-phosphate. K236 is subject to N6-(pyridoxal phosphate)lysine. T350 is a substrate binding site.

Belongs to the class-II pyridoxal-phosphate-dependent aminotransferase family. BioF subfamily. Homodimer. Requires pyridoxal 5'-phosphate as cofactor.

The catalysed reaction is 6-carboxyhexanoyl-[ACP] + L-alanine + H(+) = (8S)-8-amino-7-oxononanoate + holo-[ACP] + CO2. The protein operates within cofactor biosynthesis; biotin biosynthesis. In terms of biological role, catalyzes the decarboxylative condensation of pimeloyl-[acyl-carrier protein] and L-alanine to produce 8-amino-7-oxononanoate (AON), [acyl-carrier protein], and carbon dioxide. The sequence is that of 8-amino-7-oxononanoate synthase from Pseudomonas putida (strain ATCC 47054 / DSM 6125 / CFBP 8728 / NCIMB 11950 / KT2440).